Here is a 638-residue protein sequence, read N- to C-terminus: Threonine--tRNA ligase (638 aa).

A TGS domain is found at 1-61 (MPVITLPDGS…EHDARIEIVT (61 aa)). The tract at residues 243–534 (DHRKIAKAQD…LIEEYAGHFP (292 aa)) is catalytic. Zn(2+) contacts are provided by C334, H385, and H511.

The protein belongs to the class-II aminoacyl-tRNA synthetase family. As to quaternary structure, homodimer. Zn(2+) serves as cofactor.

The protein localises to the cytoplasm. It catalyses the reaction tRNA(Thr) + L-threonine + ATP = L-threonyl-tRNA(Thr) + AMP + diphosphate + H(+). Catalyzes the attachment of threonine to tRNA(Thr) in a two-step reaction: L-threonine is first activated by ATP to form Thr-AMP and then transferred to the acceptor end of tRNA(Thr). Also edits incorrectly charged L-seryl-tRNA(Thr). This chain is Threonine--tRNA ligase, found in Idiomarina loihiensis (strain ATCC BAA-735 / DSM 15497 / L2-TR).